Here is a 114-residue protein sequence, read N- to C-terminus: Large ribosomal subunit protein bL19 (114 aa).

Belongs to the bacterial ribosomal protein bL19 family.

This protein is located at the 30S-50S ribosomal subunit interface and may play a role in the structure and function of the aminoacyl-tRNA binding site. The protein is Large ribosomal subunit protein bL19 of Heliobacterium modesticaldum (strain ATCC 51547 / Ice1).